Consider the following 284-residue polypeptide: uncharacterized protein (284 aa).

Over residues Met1 to Met10 the composition is skewed to polar residues. Residues Met1–Gln28 are disordered.

This is an uncharacterized protein from Escherichia coli (strain K12).